The sequence spans 235 residues: Small ribosomal subunit protein uS5 (235 aa).

The 64-residue stretch at E60–I123 folds into the S5 DRBM domain. Residues C127, C132, C134, and H138 each contribute to the Zn(2+) site.

Belongs to the universal ribosomal protein uS5 family. As to quaternary structure, part of the 30S ribosomal subunit. Contacts protein S4. It depends on Zn(2+) as a cofactor.

With S4 and S12 plays an important role in translational accuracy. The polypeptide is Small ribosomal subunit protein uS5 (Thermococcus kodakarensis (strain ATCC BAA-918 / JCM 12380 / KOD1) (Pyrococcus kodakaraensis (strain KOD1))).